Here is a 239-residue protein sequence, read N- to C-terminus: Vesicle-associated protein 1-2 (239 aa).

The residue at position 1 (M1) is an N-acetylmethionine. Over 1–215 the chain is Cytoplasmic; that stretch reads MSNELLTIDP…RRESKRSKSG (215 aa). Position 2 is an N-acetylserine; in Vesicle-associated protein 1-2, N-terminally processed (S2). The 121-residue stretch at 5-125 folds into the MSP domain; the sequence is LLTIDPVDLQ…EETKLRVVYV (121 aa). Positions 123–174 are disordered; sequence VYVAPPRPPSPVREGSEEGSSPRASVSDNGNASDFTAAPRFSADRVDAQDNS. Phosphoserine is present on S132. Polar residues predominate over residues 140-156; the sequence is EGSSPRASVSDNGNASD. Residue S164 is modified to Phosphoserine. The stretch at 169-215 forms a coiled coil; the sequence is DAQDNSSEARALVTKLTEEKNSAVQLNNRLQQELDQLRRESKRSKSG. A helical; Anchor for type IV membrane protein transmembrane segment spans residues 216–236; it reads GIPFMYVLLVGLIGLILGYIM.

It belongs to the VAMP-associated protein (VAP) (TC 9.B.17) family. In terms of assembly, interacts with ORP3A. Binds to VLG at the endomembrane system.

It is found in the endoplasmic reticulum membrane. Vesicle-associated protein that binds the oxysterol-binding protein ORP3A and allows its targeting to the ER. This is Vesicle-associated protein 1-2 from Arabidopsis thaliana (Mouse-ear cress).